The chain runs to 374 residues: Alanine racemase (374 aa).

Lys-40 functions as the Proton acceptor; specific for D-alanine in the catalytic mechanism. The residue at position 40 (Lys-40) is an N6-(pyridoxal phosphate)lysine. Position 136 (Arg-136) interacts with substrate. The Proton acceptor; specific for L-alanine role is filled by Tyr-264. Met-311 is a binding site for substrate.

Belongs to the alanine racemase family. Pyridoxal 5'-phosphate serves as cofactor.

The enzyme catalyses L-alanine = D-alanine. It functions in the pathway amino-acid biosynthesis; D-alanine biosynthesis; D-alanine from L-alanine: step 1/1. Functionally, catalyzes the interconversion of L-alanine and D-alanine. May also act on other amino acids. This is Alanine racemase (alr) from Pediococcus pentosaceus (strain ATCC 25745 / CCUG 21536 / LMG 10740 / 183-1w).